A 625-amino-acid polypeptide reads, in one-letter code: Glyco-Gag protein (625 aa).

Over 1–66 the chain is Cytoplasmic; that stretch reads LGDVSEASGA…SVFRRNRAAR (66 aa). A helical transmembrane segment spans residues 67-86; that stretch reads LVCLSIVLSFVCSLLFWTAS. The Extracellular segment spans residues 87–625; that stretch reads KNMGQTVTTP…PQTSLLTLDD (539 aa). N-linked (GlcNAc...) asparagine; by host glycosylation occurs at asparagine 113. A disordered region spans residues 195 to 305; that stretch reads PSPTAPILPS…STTSRAFPLR (111 aa). The N-linked (GlcNAc...) asparagine; by host glycan is linked to asparagine 479. 2 stretches are compositionally biased toward basic and acidic residues: residues 522–553 and 573–606; these read ETPE…EKER and RQDR…DCPK. The tract at residues 522–625 is disordered; the sequence is ETPEEREERV…PQTSLLTLDD (104 aa).

Post-translationally, glycosylated by host. Cleaved by host near the middle of the molecule, releasing the c-terminal half containing capsid and nucleoprotein domains op GAG.

It is found in the host cell membrane. Plays a role in viral particle release. Presumably acts by facilitating the fission of the virion bud at the cell surface. May prevent the antiviral activity of murine APOBEC3. The sequence is that of Glyco-Gag protein from AKV murine leukemia virus (AKR (endogenous) murine leukemia virus).